The sequence spans 175 residues: FOXL2 neighbor protein (175 aa).

Disordered stretches follow at residues 1–39 (MTRT…PALV) and 70–100 (AQKT…GKRR).

This Homo sapiens (Human) protein is FOXL2 neighbor protein (FOXL2NB).